A 1329-amino-acid polypeptide reads, in one-letter code: MAETQTLNFGPEWLRALAGGVGSSIVASPPLSPALPKYKLADYRYGREEMLALYVKDNMIPVDLHDKEFLPILQEEPLPPLALVPFTEEEQRNFSMSVNSAAVLRLTGRGGGTVAGAPRGRSSSRGRGRGRGDGFYQRSFDDVEGGFGRGGREMHRSQSWEERGDRRFEKPGRKDPDGAPAHFPLNHIRANYEDPAAVNARKFIHAECDNWRTTRDELNGEEDDNGWRLAGARRENERWCPPSPDGPRSAGWREHPDQRRRFGFGDEERSGYRRPRSGSGSAEEERDSLPEWCLEDAEEETGTFDSSGAFLSLKVRALEKAPKEPILEEAELDFRPLEENDEYAEKDDSETEQTKDTDTNTRHESDRNEENCKSEEPSPVAVPFSAVVTPPKATTPAPIQPVHLEKAEDKERPSERTTLPEIRHELSKAPLHTALSNSIVEAISIPHVANKLPDLPVPAPSVLPVKSVPPQSQQVKPIEMPVSVPPALLRSTGSVGPISRPSALPSDLDEDEGLKHFEQEAEKMVAYLQDGGVDDERLASKIGPKPSALPITNEAAFKWFYKDPQGEIQGPFNNQEMSEWFQAGYFTMTLQVKRGCDEMFQPLGEMIKLWGRVPFTPGPTLPPILGDADQERMKRQQEINALNMYQLQQMQYQYLLRQQYALQQKVLNSAPPPPPPPQQQLNLLLHQALKIRTPEPQQSLLPPVTRSMSVPDSGSVWEMQNPSTQASCSPNMQPAAPSTWEGSSVWDLPLDNMPQASSIEQLQLEKAKALKLEMERREAELRAKREEEERKRLEEALRARQEEERKRLEEEELARRKQEEALKRQREQEEAQRRKKEEEERLAQEEALRRLEERRREEEERRQREEFLRKQQEEERRKQEELEAQRRREEEKRLEEEAAAAAAALLRQQQEEQKKREQEAQRQQELQRQRQQQQEALRRLQQQQQQQQLAQMKLPSSSKWGQQSTTANSLSQSQNALSLAEIQKLEEERERQTREEQRRQQQELQRVQQQQPQTKLPGWGSVAKQPMATKSLLEIQREEAQQMKQRKDQQQQQQQQQQPPPQPQPQQHSTNTQQNRTQNRAAINTSVWGSVNNVSSNWMMDSSVWGDTQNSNIGFWDEAVKEAAPPQTTRKSHTPKNKGNANLSNSSSGKASKKVEEEEKLLKLFQGANKNQDGFMQWCEQTLHTLNTANNLDVPTFASFLKEVDSPYEVHDYVRAYLGDTPQAKDFAKQFLERRAKQNDNQQKPQQGQQQKQQESVWGIREVPQSVLLQQQQQQQLQQQQQQRFETVTSGKKKKKQKMVRADPSLLGFSVNASSERLNMGEIETVEDF.

Disordered regions lie at residues 109-184 (RGGG…AHFP) and 236-419 (NERW…RTTL). 2 stretches are compositionally biased toward basic and acidic residues: residues 150–177 (GGRE…KDPD) and 251–271 (GWRE…ERSG). Residues 293–302 (CLEDAEEETG) are compositionally biased toward acidic residues. The segment covering 316–338 (RALEKAPKEPILEEAELDFRPLE) has biased composition (basic and acidic residues). The span at 339–351 (ENDEYAEKDDSET) shows a compositional bias: acidic residues. A compositionally biased stretch (basic and acidic residues) spans 352–376 (EQTKDTDTNTRHESDRNEENCKSEE). Positions 377 to 397 (PSPVAVPFSAVVTPPKATTPA) are enriched in low complexity. Basic and acidic residues predominate over residues 403 to 415 (HLEKAEDKERPSE). In terms of domain architecture, GYF spans 556–604 (AFKWFYKDPQGEIQGPFNNQEMSEWFQAGYFTMTLQVKRGCDEMFQPLG). Polar residues predominate over residues 720–732 (QNPSTQASCSPNM). Disordered regions lie at residues 720 to 740 (QNPS…PSTW), 781 to 1081 (LRAK…QNRA), 1122 to 1155 (EAAP…SKKV), 1236 to 1256 (AKQN…QQES), and 1279 to 1302 (QQQQ…MVRA). A compositionally biased stretch (basic and acidic residues) spans 781–896 (LRAKREEEER…RREEEKRLEE (116 aa)). Positions 899-908 (AAAAAALLRQ) are enriched in low complexity. Residues 909-928 (QQEEQKKREQEAQRQQELQR) are compositionally biased toward basic and acidic residues. The span at 929-951 (QRQQQQEALRRLQQQQQQQQLAQ) shows a compositional bias: low complexity. A compositionally biased stretch (polar residues) spans 954-966 (LPSSSKWGQQSTT). The segment covering 967 to 980 (ANSLSQSQNALSLA) has biased composition (low complexity). Residues 983-1001 (QKLEEERERQTREEQRRQQ) are compositionally biased toward basic and acidic residues. A compositionally biased stretch (low complexity) spans 1002 to 1013 (QELQRVQQQQPQ). Residues 1035–1049 (IQREEAQQMKQRKDQ) are compositionally biased toward basic and acidic residues. Residues 1068–1081 (HSTNTQQNRTQNRA) are compositionally biased toward polar residues. Over residues 1239–1254 (NDNQQKPQQGQQQKQQ) the composition is skewed to low complexity.

The protein belongs to the GIGYF family. As to quaternary structure, component of the 4EHP-GYF2 complex.

Its function is as follows. Key component of the 4EHP-GYF2 complex, a multiprotein complex that acts as a repressor of translation initiation. In association with EIF4E2, assists ribosome-associated quality control (RQC) by sequestering the mRNA cap, blocking ribosome initiation and decreasing the translational load on problematic messages. This Danio rerio (Zebrafish) protein is GRB10-interacting GYF protein 2 (gigyf2).